The following is a 596-amino-acid chain: Beta-glucuronidase (596 aa).

Asp-168 and Asn-412 together coordinate D-glucuronate. Glu-413 functions as the Proton donor in the catalytic mechanism. Residues Asn-464, Tyr-470, Glu-502, Trp-547, and Lys-566 each coordinate D-glucuronate. The Nucleophile role is filled by Glu-502. An N-K motif motif is present at residues 564 to 566 (NKK).

This sequence belongs to the glycosyl hydrolase 2 family.

It is found in the cytoplasm. It catalyses the reaction a beta-D-glucuronoside + H2O = D-glucuronate + an alcohol. Its function is as follows. Displays beta-glucuronidase activity with the artificial substrate p-nitrophenyl-beta-D-glucuronide (PNPG). Is probably involved in the metabolism of oligosaccharides containing the 3-O-beta-D-glucopyranosyl-beta-D-glucuronide structure released from bacterial and plant acidic carbohydrates. The chain is Beta-glucuronidase from Paenibacillus borealis.